We begin with the raw amino-acid sequence, 186 residues long: Elongation factor P (186 aa).

The protein belongs to the elongation factor P family.

It localises to the cytoplasm. It participates in protein biosynthesis; polypeptide chain elongation. Involved in peptide bond synthesis. Stimulates efficient translation and peptide-bond synthesis on native or reconstituted 70S ribosomes in vitro. Probably functions indirectly by altering the affinity of the ribosome for aminoacyl-tRNA, thus increasing their reactivity as acceptors for peptidyl transferase. In Ruminiclostridium cellulolyticum (strain ATCC 35319 / DSM 5812 / JCM 6584 / H10) (Clostridium cellulolyticum), this protein is Elongation factor P.